Consider the following 729-residue polypeptide: Golgin subfamily A member 5 (729 aa).

Residue Ser2 is modified to N-acetylserine. Topologically, residues 2–696 are cytoplasmic; that stretch reads SWFADLAGRA…IFLRRYPIAR (695 aa). Arg27 and Arg89 each carry dimethylated arginine. Disordered stretches follow at residues 89-222 and 626-645; these read RTVG…SQEL and SASS…VDSG. The residue at position 116 (Ser116) is a Phosphoserine. A compositionally biased stretch (basic and acidic residues) spans 134-146; sequence PTGRVEVKKEKGR. Low complexity predominate over residues 148-167; the sequence is PVSPSSPSGVSSVNTSVTTT. Composition is skewed to polar residues over residues 175–186 and 626–638; these read GSQSPGVNSSDS and SASS…SAIN. Residues 215-629 are a coiled coil; sequence GSSRSQELSN…LEQQVHSASS (415 aa). The chain crosses the membrane as a helical; Anchor for type IV membrane protein span at residues 697-717; sequence VFVIIYMALLHLWVMIVLLTY. Residues 718 to 729 lie on the Lumenal side of the membrane; it reads SPEMHHDQPYGK.

Homodimer. Interacts with RAB1A that has been activated by GTP-binding. Interacts with isoform CASP of CUX1. Post-translationally, highly phosphorylated during mitosis. Phosphorylation is barely detectable during interphase.

The protein localises to the golgi apparatus membrane. Its function is as follows. Involved in maintaining Golgi structure. Stimulates the formation of Golgi stacks and ribbons. Involved in intra-Golgi retrograde transport. The polypeptide is Golgin subfamily A member 5 (Golga5) (Mus musculus (Mouse)).